Consider the following 72-residue polypeptide: Alpha-elapitoxin-Dv2b (72 aa).

Cystine bridges form between C3–C21, C14–C42, C27–C31, C46–C57, and C58–C63.

The protein belongs to the three-finger toxin family. Long-chain subfamily. Type II alpha-neurotoxin sub-subfamily. Post-translationally, neurotoxin 4.7.3 differs from 4.9.3 only in that Trp-26 has undergone partial photooxidation. As to expression, expressed by the venom gland.

It localises to the secreted. In terms of biological role, binds with high affinity to muscular (alpha-1/CHRNA1) and neuronal (alpha-7/CHRNA7) nicotinic acetylcholine receptor (nAChR) and inhibits acetylcholine from binding to the receptor, thereby impairing neuromuscular and neuronal transmission. This chain is Alpha-elapitoxin-Dv2b, found in Dendroaspis viridis (Western green mamba).